A 492-amino-acid polypeptide reads, in one-letter code: Aspartyl/glutamyl-tRNA(Asn/Gln) amidotransferase subunit B (492 aa).

The protein belongs to the GatB/GatE family. GatB subfamily. As to quaternary structure, heterotrimer of A, B and C subunits.

The catalysed reaction is L-glutamyl-tRNA(Gln) + L-glutamine + ATP + H2O = L-glutaminyl-tRNA(Gln) + L-glutamate + ADP + phosphate + H(+). The enzyme catalyses L-aspartyl-tRNA(Asn) + L-glutamine + ATP + H2O = L-asparaginyl-tRNA(Asn) + L-glutamate + ADP + phosphate + 2 H(+). Its function is as follows. Allows the formation of correctly charged Asn-tRNA(Asn) or Gln-tRNA(Gln) through the transamidation of misacylated Asp-tRNA(Asn) or Glu-tRNA(Gln) in organisms which lack either or both of asparaginyl-tRNA or glutaminyl-tRNA synthetases. The reaction takes place in the presence of glutamine and ATP through an activated phospho-Asp-tRNA(Asn) or phospho-Glu-tRNA(Gln). The sequence is that of Aspartyl/glutamyl-tRNA(Asn/Gln) amidotransferase subunit B from Dehalococcoides mccartyi (strain ATCC BAA-2266 / KCTC 15142 / 195) (Dehalococcoides ethenogenes (strain 195)).